Here is a 52-residue protein sequence, read N- to C-terminus: Movement protein TGBp3 (52 aa).

Residues 1–3 (MHE) lie on the Lumenal side of the membrane. A helical transmembrane segment spans residues 4 to 21 (SHLVVILALLLLALWCLS). Residues 22–52 (TRPVQPSCHVEINGHSIIVTGNCWHSTQRPH) are Cytoplasmic-facing.

This sequence belongs to the Tymovirales TGBp3 protein family.

The protein localises to the host endoplasmic reticulum membrane. In terms of biological role, plays a role in viral cell-to-cell propagation, by facilitating genome transport to neighboring plant cells through plasmosdesmata. May induce the formation of granular vesicles derived from the Endoplasmic reticulum, which align on actin filaments. The protein is Movement protein TGBp3 of Foxtail mosaic virus.